The sequence spans 438 residues: Trigger factor (438 aa).

Positions 163-248 (GEIAVLDFAA…VHAVKERKLP (86 aa)) constitute a PPIase FKBP-type domain.

It belongs to the FKBP-type PPIase family. Tig subfamily.

Its subcellular location is the cytoplasm. The enzyme catalyses [protein]-peptidylproline (omega=180) = [protein]-peptidylproline (omega=0). Functionally, involved in protein export. Acts as a chaperone by maintaining the newly synthesized protein in an open conformation. Functions as a peptidyl-prolyl cis-trans isomerase. The protein is Trigger factor of Oleidesulfovibrio alaskensis (strain ATCC BAA-1058 / DSM 17464 / G20) (Desulfovibrio alaskensis).